The sequence spans 264 residues: tRNA (guanine-N(1)-)-methyltransferase (264 aa).

Residues glycine 125 and 145 to 150 each bind S-adenosyl-L-methionine; that span reads LGDFVL.

The protein belongs to the RNA methyltransferase TrmD family. In terms of assembly, homodimer.

The protein localises to the cytoplasm. It carries out the reaction guanosine(37) in tRNA + S-adenosyl-L-methionine = N(1)-methylguanosine(37) in tRNA + S-adenosyl-L-homocysteine + H(+). Its function is as follows. Specifically methylates guanosine-37 in various tRNAs. This chain is tRNA (guanine-N(1)-)-methyltransferase, found in Burkholderia mallei (strain NCTC 10247).